Consider the following 227-residue polypeptide: Ashwin (227 aa).

The segment covering leucine 71–arginine 84 has biased composition (basic and acidic residues). Residues leucine 71 to proline 227 are disordered. Residues serine 88 to aspartate 98 show a composition bias toward low complexity. Over residues glycine 153–glycine 173 the composition is skewed to polar residues. Residues serine 178–asparagine 191 are compositionally biased toward low complexity. The span at glycine 204–lysine 219 shows a compositional bias: basic and acidic residues.

This sequence belongs to the ashwin family.

The protein resides in the nucleus. In Danio rerio (Zebrafish), this protein is Ashwin.